We begin with the raw amino-acid sequence, 58 residues long: Large ribosomal subunit protein bL32 (58 aa).

The protein belongs to the bacterial ribosomal protein bL32 family.

This Caldicellulosiruptor bescii (strain ATCC BAA-1888 / DSM 6725 / KCTC 15123 / Z-1320) (Anaerocellum thermophilum) protein is Large ribosomal subunit protein bL32.